The primary structure comprises 173 residues: Disulfide bond formation protein B (173 aa).

The Cytoplasmic portion of the chain corresponds to 1–14 (MIEFLRRIAAHRLA). Residues 15–31 (WSLLAASALFLELSALF) form a helical membrane-spanning segment. The Periplasmic portion of the chain corresponds to 32-49 (FQHVLGLHPCVMCVYERI). Residues Cys41 and Cys44 are joined by a disulfide bond. A helical membrane pass occupies residues 50–65 (ATLGVLTAGLLGMVAP). Topologically, residues 66-72 (QKWYVRW) are cytoplasmic. A helical transmembrane segment spans residues 73-90 (SALLLWGSSAFWGLKLAL). Over 91–145 (KHVDYQVNPSPFNVCEGFVDFPSWAPLDQWIPWMFYPDGDCSEVTWQFLSFSMPQ) the chain is Periplasmic. A disulfide bridge links Cys105 with Cys131. A helical membrane pass occupies residues 146-164 (WLVAIFAVYLLVFVVVAIG). Over 165 to 173 (NLVKGRCCS) the chain is Cytoplasmic.

Belongs to the DsbB family.

It is found in the cell inner membrane. Required for disulfide bond formation in some periplasmic proteins. Acts by oxidizing the DsbA protein. This is Disulfide bond formation protein B from Aeromonas hydrophila subsp. hydrophila (strain ATCC 7966 / DSM 30187 / BCRC 13018 / CCUG 14551 / JCM 1027 / KCTC 2358 / NCIMB 9240 / NCTC 8049).